A 158-amino-acid chain; its full sequence is Probable flavodoxin 1 (158 aa).

One can recognise a Flavodoxin-like domain in the interval 4 to 144 (ALITYASMSG…SCRAFARGFL (141 aa)).

This sequence belongs to the flavodoxin family. Requires FMN as cofactor.

Low-potential electron donor to a number of redox enzymes. In Bacillus subtilis (strain 168), this protein is Probable flavodoxin 1 (ykuN).